Here is a 318-residue protein sequence, read N- to C-terminus: Transaldolase (318 aa).

Catalysis depends on Lys-132, which acts as the Schiff-base intermediate with substrate.

It belongs to the transaldolase family. Type 1 subfamily. Homodimer.

The protein resides in the cytoplasm. It carries out the reaction D-sedoheptulose 7-phosphate + D-glyceraldehyde 3-phosphate = D-erythrose 4-phosphate + beta-D-fructose 6-phosphate. The protein operates within carbohydrate degradation; pentose phosphate pathway; D-glyceraldehyde 3-phosphate and beta-D-fructose 6-phosphate from D-ribose 5-phosphate and D-xylulose 5-phosphate (non-oxidative stage): step 2/3. In terms of biological role, transaldolase is important for the balance of metabolites in the pentose-phosphate pathway. This chain is Transaldolase, found in Shewanella pealeana (strain ATCC 700345 / ANG-SQ1).